The following is a 159-amino-acid chain: Transmembrane protein 92 (159 aa).

An N-terminal signal peptide occupies residues 1–26; sequence MSQAWVPGLAPTLLFSLLAGPQKIAA. Residues 27-57 lie on the Extracellular side of the membrane; it reads KCGLILACPKGFKCCGDSCCQENELFPGPVR. A helical transmembrane segment spans residues 58-78; it reads IFVIIFLVILSVFCICGLAKC. At 79–159 the chain is on the cytoplasmic side; the sequence is FCRNCREPEP…DQRGIDNPAF (81 aa). A disordered region spans residues 122 to 159; sequence EVILKPSLGPTPTEPPPPYSFRPEEYTGDQRGIDNPAF.

The protein resides in the membrane. This is Transmembrane protein 92 (TMEM92) from Homo sapiens (Human).